The chain runs to 78 residues: Acyl carrier protein (78 aa).

The Carrier domain maps to 2-77; it reads STIEERVKKI…AAIDFIQANQ (76 aa). Ser-37 is modified (O-(pantetheine 4'-phosphoryl)serine).

The protein belongs to the acyl carrier protein (ACP) family. Post-translationally, 4'-phosphopantetheine is transferred from CoA to a specific serine of apo-ACP by AcpS. This modification is essential for activity because fatty acids are bound in thioester linkage to the sulfhydryl of the prosthetic group.

It localises to the cytoplasm. The protein operates within lipid metabolism; fatty acid biosynthesis. Carrier of the growing fatty acid chain in fatty acid biosynthesis. The protein is Acyl carrier protein of Pectobacterium atrosepticum (strain SCRI 1043 / ATCC BAA-672) (Erwinia carotovora subsp. atroseptica).